Consider the following 542-residue polypeptide: Chaperonin GroEL (542 aa).

ATP contacts are provided by residues 29 to 32, Lys-50, 86 to 90, Gly-413, 477 to 479, and Asp-493; these read TLGP, DGTTT, and NAA.

The protein belongs to the chaperonin (HSP60) family. In terms of assembly, forms a cylinder of 14 subunits composed of two heptameric rings stacked back-to-back. Interacts with the co-chaperonin GroES.

The protein localises to the cytoplasm. It catalyses the reaction ATP + H2O + a folded polypeptide = ADP + phosphate + an unfolded polypeptide.. Functionally, together with its co-chaperonin GroES, plays an essential role in assisting protein folding. The GroEL-GroES system forms a nano-cage that allows encapsulation of the non-native substrate proteins and provides a physical environment optimized to promote and accelerate protein folding. This is Chaperonin GroEL from Solibacter usitatus (strain Ellin6076).